Reading from the N-terminus, the 354-residue chain is Abasic site processing protein HMCES (354 aa).

The active-site Nucleophile is the cysteine 2. Cysteine 2 carries the post-translational modification Thiazolidine linkage to a ring-opened DNA abasic site. Residue glutamate 127 is part of the active site. Residues lysine 148 and lysine 151 each participate in a glycyl lysine isopeptide (Lys-Gly) (interchain with G-Cter in SUMO2) cross-link. At serine 160 the chain carries Phosphoserine. A Glycyl lysine isopeptide (Lys-Gly) (interchain with G-Cter in SUMO2) cross-link involves residue lysine 276. A disordered region spans residues 292–354 (ATKSPKKEDS…EPVAKRPYSQ (63 aa)). Residue serine 295 is modified to Phosphoserine. Positions 296–309 (PKKEDSKTPQKEES) are enriched in basic and acidic residues. Residue lysine 306 forms a Glycyl lysine isopeptide (Lys-Gly) (interchain with G-Cter in SUMO2) linkage. Serine 322 carries the post-translational modification Phosphoserine. The short motif at 332–338 (GLLEQWL) is the PIP-box element. The segment covering 337-348 (WLKREKEEEPVA) has biased composition (basic and acidic residues). Glycyl lysine isopeptide (Lys-Gly) (interchain with G-Cter in SUMO2) cross-links involve residues lysine 339 and lysine 342.

This sequence belongs to the SOS response-associated peptidase family. As to quaternary structure, interacts (via PIP-box motif) with PCNA. Ubiquitinated; the covalent HMCES DNA-protein cross-link is ubiquitinated, leading to its degradation by the proteasome.

It is found in the chromosome. Formation and reversal of DNA-protein cross-link depends on DNA context. Catalyzes formation of the thiazolidine linkage in presence of abasic sites in single-stranded DNA. Mediates the reversal of the thiazolidine cross-link in presence of double stranded DNA. Its function is as follows. Sensor of abasic sites in single-stranded DNA (ssDNA) required to preserve genome integrity by promoting error-free repair of abasic sites. Acts as an enzyme that recognizes and binds abasic sites in ssDNA at replication forks and chemically modifies the lesion by forming a covalent cross-link with DNA: forms a stable thiazolidine linkage between a ring-opened abasic site and the alpha-amino and sulfhydryl substituents of its N-terminal catalytic cysteine residue. Promotes error-free repair by protecting abasic sites from translesion synthesis (TLS) polymerases and endonucleases that are error-prone and would generate mutations and double-strand breaks. The HMCES DNA-protein cross-link is then either reversed or degraded. HMCES is able to catalyze the reversal of its thiazolidine cross-link and cycle between a cross-link and a non-cross-linked state depending on DNA context: mediates self-reversal of the thiazolidine cross-link in double stranded DNA, allowing APEX1 to initiate downstream repair of abasic sites. The HMCES DNA-protein cross-link can also be degraded by the SPRTN metalloprotease following unfolding by the BRIP1/FANCJ helicase. Has preference for ssDNA, but can also accommodate double-stranded DNA with 3' or 5' overhang (dsDNA), and dsDNA-ssDNA 3' junction. Plays a protective role during somatic hypermutation of immunoglobulin genes in B-cells: acts via its ability to form covalent cross-links with abasic sites, thereby limiting the accumulation of deletions in somatic hypermutation target regions. Also involved in class switch recombination (CSR) in B-cells independently of the formation of a DNA-protein cross-link: acts by binding and protecting ssDNA overhangs to promote DNA double-strand break repair through the microhomology-mediated alternative-end-joining (Alt-EJ) pathway. Acts as a protease: mediates autocatalytic processing of its N-terminal methionine in order to expose the catalytic cysteine. The sequence is that of Abasic site processing protein HMCES from Pongo abelii (Sumatran orangutan).